A 475-amino-acid chain; its full sequence is Aspartyl/glutamyl-tRNA(Asn/Gln) amidotransferase subunit B (475 aa).

It belongs to the GatB/GatE family. GatB subfamily. In terms of assembly, heterotrimer of A, B and C subunits.

It carries out the reaction L-glutamyl-tRNA(Gln) + L-glutamine + ATP + H2O = L-glutaminyl-tRNA(Gln) + L-glutamate + ADP + phosphate + H(+). The enzyme catalyses L-aspartyl-tRNA(Asn) + L-glutamine + ATP + H2O = L-asparaginyl-tRNA(Asn) + L-glutamate + ADP + phosphate + 2 H(+). Its function is as follows. Allows the formation of correctly charged Asn-tRNA(Asn) or Gln-tRNA(Gln) through the transamidation of misacylated Asp-tRNA(Asn) or Glu-tRNA(Gln) in organisms which lack either or both of asparaginyl-tRNA or glutaminyl-tRNA synthetases. The reaction takes place in the presence of glutamine and ATP through an activated phospho-Asp-tRNA(Asn) or phospho-Glu-tRNA(Gln). The polypeptide is Aspartyl/glutamyl-tRNA(Asn/Gln) amidotransferase subunit B (Thermodesulfovibrio yellowstonii (strain ATCC 51303 / DSM 11347 / YP87)).